Reading from the N-terminus, the 226-residue chain is Adenylate kinase (226 aa).

An ATP-binding site is contributed by glycine 12–threonine 17. Positions glutamate 32–valine 61 are NMP. AMP-binding positions include serine 33, arginine 38, aspartate 59–valine 61, glycine 87–arginine 90, and glutamine 94. Residues glycine 128–aspartate 171 are LID. Residue arginine 129 coordinates ATP. 2 residues coordinate AMP: arginine 168 and arginine 180. Residue alanine 213 participates in ATP binding.

It belongs to the adenylate kinase family. Monomer.

The protein resides in the cytoplasm. It catalyses the reaction AMP + ATP = 2 ADP. It participates in purine metabolism; AMP biosynthesis via salvage pathway; AMP from ADP: step 1/1. Functionally, catalyzes the reversible transfer of the terminal phosphate group between ATP and AMP. Plays an important role in cellular energy homeostasis and in adenine nucleotide metabolism. This Desulfotalea psychrophila (strain LSv54 / DSM 12343) protein is Adenylate kinase.